The following is a 268-amino-acid chain: Glutamate racemase (268 aa).

Residues 9–10 and 41–42 contribute to the substrate site; these read DS and YG. Cysteine 73 functions as the Proton donor/acceptor in the catalytic mechanism. 74 to 75 serves as a coordination point for substrate; that stretch reads NS. Catalysis depends on cysteine 183, which acts as the Proton donor/acceptor. 184 to 185 contacts substrate; sequence TH.

It belongs to the aspartate/glutamate racemases family.

It catalyses the reaction L-glutamate = D-glutamate. Its pathway is cell wall biogenesis; peptidoglycan biosynthesis. Its function is as follows. Provides the (R)-glutamate required for cell wall biosynthesis. The sequence is that of Glutamate racemase from Shewanella pealeana (strain ATCC 700345 / ANG-SQ1).